A 344-amino-acid chain; its full sequence is DNA-directed RNA polymerase subunit alpha (344 aa).

An alpha N-terminal domain (alpha-NTD) region spans residues M1–E246. Positions E259–E344 are alpha C-terminal domain (alpha-CTD).

This sequence belongs to the RNA polymerase alpha chain family. As to quaternary structure, homodimer. The RNAP catalytic core consists of 2 alpha, 1 beta, 1 beta' and 1 omega subunit. When a sigma factor is associated with the core the holoenzyme is formed, which can initiate transcription.

The enzyme catalyses RNA(n) + a ribonucleoside 5'-triphosphate = RNA(n+1) + diphosphate. DNA-dependent RNA polymerase catalyzes the transcription of DNA into RNA using the four ribonucleoside triphosphates as substrates. The chain is DNA-directed RNA polymerase subunit alpha from Borreliella burgdorferi (strain ATCC 35210 / DSM 4680 / CIP 102532 / B31) (Borrelia burgdorferi).